Reading from the N-terminus, the 359-residue chain is 3-dehydroquinate synthase (359 aa).

NAD(+)-binding positions include D69–K74, G103–D107, T127–T128, K140, K149, and T167–T170. Positions 182, 245, and 262 each coordinate Zn(2+).

It belongs to the sugar phosphate cyclases superfamily. Dehydroquinate synthase family. Requires Co(2+) as cofactor. The cofactor is Zn(2+). NAD(+) is required as a cofactor.

Its subcellular location is the cytoplasm. It carries out the reaction 7-phospho-2-dehydro-3-deoxy-D-arabino-heptonate = 3-dehydroquinate + phosphate. Its pathway is metabolic intermediate biosynthesis; chorismate biosynthesis; chorismate from D-erythrose 4-phosphate and phosphoenolpyruvate: step 2/7. Its function is as follows. Catalyzes the conversion of 3-deoxy-D-arabino-heptulosonate 7-phosphate (DAHP) to dehydroquinate (DHQ). The sequence is that of 3-dehydroquinate synthase from Ruthia magnifica subsp. Calyptogena magnifica.